The chain runs to 211 residues: MEEPPVREEEEEEGEEDEERDEVGPEGALGKSPFQLTAEDVYDISYLLGRELMALGSDPRVTQLQFKVVRVLEMLEALVNEGSLALEELKMERDHLRKEVEGLRRQSPPASGEVNLGPNKMVVDLTDPNRPRFTLQELRDVLQERNKLKSQLLVVQEELQCYKSGLIPPREGPGGRREKDAVVTSAKNAGRNKEEKTIIKKLFFFRSGKQT.

The disordered stretch occupies residues 1-32 (MEEPPVREEEEEEGEEDEERDEVGPEGALGKS). The segment covering 8–21 (EEEEEEGEEDEERD) has biased composition (acidic residues). Residues 24–106 (GPEGALGKSP…RKEVEGLRRQ (83 aa)) enclose the RH1 domain. Residues 70–164 (RVLEMLEALV…VQEELQCYKS (95 aa)) are a coiled coil. Ser107 is modified (phosphoserine). The RH2 domain occupies 130–201 (RPRFTLQELR…NKEEKTIIKK (72 aa)). A disordered region spans residues 166-190 (LIPPREGPGGRREKDAVVTSAKNAG).

This sequence belongs to the RILPL family. As to quaternary structure, homodimer. Interacts with RAC1. Interacts (via N-terminus) with MYO5A, the interaction is required for its role in dendrite formation. Interacts with RAB8A; interaction is dependent on the phosphorylation of RAB8A on 'Thr-72'. Interacts with RAB10 and RAB12; interaction is dependent on the phosphorylation of 'Thr-73' on RAB10 and 'Ser-105' on RAB12. Widely expressed. Expressed at higher level in lung.

Its subcellular location is the cytoplasm. The protein resides in the cytosol. It localises to the cytoskeleton. The protein localises to the microtubule organizing center. It is found in the centrosome. Its subcellular location is the cell projection. The protein resides in the cilium. In terms of biological role, involved in cell shape and neuronal morphogenesis, positively regulating the establishment and maintenance of dendritic spines. Plays a role in cellular protein transport, including protein transport away from primary cilia. May function via activation of RAC1 and PAK1. This chain is RILP-like protein 2 (RILPL2), found in Homo sapiens (Human).